Here is a 134-residue protein sequence, read N- to C-terminus: Small ribosomal subunit protein uS9 (134 aa).

The interval 114-134 is disordered; sequence QKESKNFGGPGARAKYQKSYR.

It belongs to the universal ribosomal protein uS9 family.

This is Small ribosomal subunit protein uS9 from Methanosarcina acetivorans (strain ATCC 35395 / DSM 2834 / JCM 12185 / C2A).